Consider the following 60-residue polypeptide: Putative per-hexamer repeat protein 1 (60 aa).

The chain is Putative per-hexamer repeat protein 1 (Phxr1) from Mus musculus (Mouse).